The following is a 463-amino-acid chain: uncharacterized protein (463 aa).

A TRAM domain is found at 9–67; sequence VLKKGQRFPLTIKRLGINGEGVGYFKRHVVFVPGALPGEEVVVEVTDVKPRFAEASIRK. C80, C86, C89, and C169 together coordinate [4Fe-4S] cluster. Residues Q293, Y322, D343, and D391 each contribute to the S-adenosyl-L-methionine site. Catalysis depends on C418, which acts as the Nucleophile.

Belongs to the class I-like SAM-binding methyltransferase superfamily. RNA M5U methyltransferase family.

This is an uncharacterized protein from Halalkalibacterium halodurans (strain ATCC BAA-125 / DSM 18197 / FERM 7344 / JCM 9153 / C-125) (Bacillus halodurans).